A 210-amino-acid polypeptide reads, in one-letter code: T-cell surface glycoprotein CD8 beta chain (210 aa).

Residues 1-21 form the signal peptide; it reads MRPRLWLLLAAQLTVLHGNSV. The 111-residue stretch at 22–132 folds into the Ig-like V-type domain; sequence LQQTPAYIKV…ELTFGKGTQL (111 aa). At 22–170 the chain is on the extracellular side; that stretch reads LQQTPAYIKV…ETQKGPLCSP (149 aa). Cysteine 41 and cysteine 116 are oxidised to a cystine. Asparagine 102 carries an N-linked (GlcNAc...) asparagine glycan. Residues 171–191 form a helical membrane-spanning segment; that stretch reads ITLGLLVAGVLVLLVSLGVAI. Over 192-210 the chain is Cytoplasmic; the sequence is HLCCRRRRARLRFMKQFYK. Tyrosine 209 carries the post-translational modification Phosphotyrosine.

As to quaternary structure, forms disulfide-linked heterodimers with CD8A at the cell surface. Interacts with CD3D; this interaction couples TCR-CD3 with CD8. Interacts with LCK. Post-translationally, phosphorylated as a consequence of T-cell activation. Palmitoylated at the cytoplasmic tail and thereby targets the heterodimer CD8A/CD8B to lipid rafts unlike CD8A homodimers. In terms of tissue distribution, isoform 1, isoform 3, isoform 5, isoform 6, isoform 7 and isoform 8 are expressed in both thymus and peripheral CD8+ T-cells. Expression of isoform 1 is higher in thymus CD8+ T-cells than in peripheral CD8+ T-cells. Expression of isoform 6 is higher in peripheral CD8+ T-cells than in thymus CD8+ T-cells.

It is found in the cell membrane. It localises to the secreted. In terms of biological role, integral membrane glycoprotein that plays an essential role in the immune response and serves multiple functions in responses against both external and internal offenses. In T-cells, functions primarily as a coreceptor for MHC class I molecule:peptide complex. The antigens presented by class I peptides are derived from cytosolic proteins while class II derived from extracellular proteins. Interacts simultaneously with the T-cell receptor (TCR) and the MHC class I proteins presented by antigen presenting cells (APCs). In turn, recruits the Src kinase LCK to the vicinity of the TCR-CD3 complex. A palmitoylation site in the cytoplasmic tail of CD8B chain contributes to partitioning of CD8 into the plasma membrane lipid rafts where signaling proteins are enriched. Once LCK recruited, it initiates different intracellular signaling pathways by phosphorylating various substrates ultimately leading to lymphokine production, motility, adhesion and activation of cytotoxic T-lymphocytes (CTLs). Additionally, plays a critical role in thymic selection of CD8+ T-cells. This Homo sapiens (Human) protein is T-cell surface glycoprotein CD8 beta chain (CD8B).